Reading from the N-terminus, the 166-residue chain is Xanthine-guanine phosphoribosyltransferase (166 aa).

5-phospho-alpha-D-ribose 1-diphosphate-binding positions include 42 to 43 (RG) and 99 to 107 (DDLTDTGKT). Aspartate 100 is a binding site for Mg(2+). 2 residues coordinate guanine: aspartate 103 and isoleucine 146. Residues aspartate 103 and isoleucine 146 each contribute to the xanthine site. GMP contacts are provided by residues 103–107 (DTGKT) and 145–146 (WI).

This sequence belongs to the purine/pyrimidine phosphoribosyltransferase family. XGPT subfamily. As to quaternary structure, homotetramer. Mg(2+) serves as cofactor.

It is found in the cell inner membrane. It catalyses the reaction GMP + diphosphate = guanine + 5-phospho-alpha-D-ribose 1-diphosphate. It carries out the reaction XMP + diphosphate = xanthine + 5-phospho-alpha-D-ribose 1-diphosphate. The enzyme catalyses IMP + diphosphate = hypoxanthine + 5-phospho-alpha-D-ribose 1-diphosphate. It participates in purine metabolism; GMP biosynthesis via salvage pathway; GMP from guanine: step 1/1. Its pathway is purine metabolism; XMP biosynthesis via salvage pathway; XMP from xanthine: step 1/1. In terms of biological role, purine salvage pathway enzyme that catalyzes the transfer of the ribosyl-5-phosphate group from 5-phospho-alpha-D-ribose 1-diphosphate (PRPP) to the N9 position of the 6-oxopurines guanine and xanthine to form the corresponding ribonucleotides GMP (guanosine 5'-monophosphate) and XMP (xanthosine 5'-monophosphate), with the release of PPi. To a lesser extent, also acts on hypoxanthine. The protein is Xanthine-guanine phosphoribosyltransferase of Mesorhizobium japonicum (strain LMG 29417 / CECT 9101 / MAFF 303099) (Mesorhizobium loti (strain MAFF 303099)).